We begin with the raw amino-acid sequence, 548 residues long: Folylpolyglutamate synthase (548 aa).

130 to 133 (GKGS) is an ATP binding site. Positions 157, 234, and 262 each coordinate Mg(2+). The ATP site is built by arginine 382 and aspartate 396.

It belongs to the folylpolyglutamate synthase family. The cofactor is a monovalent cation.

The protein resides in the mitochondrion inner membrane. Its subcellular location is the mitochondrion matrix. It is found in the cytoplasm. It carries out the reaction (6S)-5,6,7,8-tetrahydrofolyl-(gamma-L-Glu)(n) + L-glutamate + ATP = (6S)-5,6,7,8-tetrahydrofolyl-(gamma-L-Glu)(n+1) + ADP + phosphate + H(+). It participates in cofactor biosynthesis; tetrahydrofolylpolyglutamate biosynthesis. Functionally, catalyzes conversion of folates to polyglutamate derivatives allowing concentration of folate compounds in the cell and the intracellular retention of these cofactors, which are important substrates for most of the folate-dependent enzymes that are involved in one-carbon transfer reactions involved in purine, pyrimidine and amino acid synthesis. Required for methionine synthesis and maintenance of intact mitochondrial DNA. Involved in telomere maintenance. This Saccharomyces cerevisiae (strain FostersB) (Baker's yeast) protein is Folylpolyglutamate synthase.